We begin with the raw amino-acid sequence, 297 residues long: MLLGSHVSMSGKEMLLGSSKEALSYGANTFMIYTGAPQNTRRKAIADLNIMNGRLHMKEHGMTNIVVHAPYIINIGNTEKPETFRLGVDFLQSEIERTAALEATQIVLHPGAHVGAGADAGIAKIIEGLNEVLSQDYPVQIALETMAGKGTECGRSFEELAKIIDGVTHNERLSVCFDTCHTHDAGYNIVEDFDGVLNEFDKLIGVDRIKVLHINDSKNVRGAAKDRHENIGFGHIGFDALNYVVHHPQLMAIPKILETPFVPLASDAKSKSAPYKAEIEMLRSSTFKPELIEALKG.

Zn(2+) is bound by residues histidine 68, histidine 109, glutamate 144, aspartate 178, histidine 181, histidine 213, aspartate 226, histidine 228, and glutamate 258.

It belongs to the AP endonuclease 2 family. The cofactor is Zn(2+).

The enzyme catalyses Endonucleolytic cleavage to 5'-phosphooligonucleotide end-products.. In terms of biological role, endonuclease IV plays a role in DNA repair. It cleaves phosphodiester bonds at apurinic or apyrimidinic (AP) sites, generating a 3'-hydroxyl group and a 5'-terminal sugar phosphate. This chain is Probable endonuclease 4, found in Lysinibacillus sphaericus (strain C3-41).